We begin with the raw amino-acid sequence, 489 residues long: Rhamnulokinase (489 aa).

Residue 13–17 participates in ATP binding; sequence ASSGR. Residues cysteine 68 and cysteine 222 are joined by a disulfide bond. Substrate contacts are provided by residues glycine 83 and 236–238; that span reads HDT. Aspartate 237 (proton acceptor) is an active-site residue. Threonine 259 contacts ATP. A substrate-binding site is contributed by asparagine 296. Glutamine 304 is an ATP binding site. Cysteine 353 and cysteine 370 are disulfide-bonded. Residue glycine 402 participates in ATP binding. Residues cysteine 413 and cysteine 417 are joined by a disulfide bond.

The protein belongs to the rhamnulokinase family. Mg(2+) serves as cofactor.

The enzyme catalyses L-rhamnulose + ATP = L-rhamnulose 1-phosphate + ADP + H(+). The protein operates within carbohydrate degradation; L-rhamnose degradation; glycerone phosphate from L-rhamnose: step 2/3. Functionally, involved in the catabolism of L-rhamnose (6-deoxy-L-mannose). Catalyzes the transfer of the gamma-phosphate group from ATP to the 1-hydroxyl group of L-rhamnulose to yield L-rhamnulose 1-phosphate. The sequence is that of Rhamnulokinase from Salmonella agona (strain SL483).